Here is a 77-residue protein sequence, read N- to C-terminus: Acyl carrier protein (77 aa).

A Carrier domain is found at M1–G76. S36 is modified (O-(pantetheine 4'-phosphoryl)serine).

It belongs to the acyl carrier protein (ACP) family. 4'-phosphopantetheine is transferred from CoA to a specific serine of apo-ACP by AcpS. This modification is essential for activity because fatty acids are bound in thioester linkage to the sulfhydryl of the prosthetic group.

It is found in the cytoplasm. It functions in the pathway lipid metabolism; fatty acid biosynthesis. Functionally, carrier of the growing fatty acid chain in fatty acid biosynthesis. The polypeptide is Acyl carrier protein (Campylobacter concisus (strain 13826)).